We begin with the raw amino-acid sequence, 724 residues long: Solute carrier organic anion transporter family member 4C1 (724 aa).

Positions 1–80 (MQGSKGVENP…PPGSQLSELE (80 aa)) are disordered. Over 1-101 (MQGSKGVENP…QCLQRCNNPK (101 aa)) the chain is Cytoplasmic. A phosphoserine mark is found at Ser-15 and Ser-16. Thr-19 is subject to Phosphothreonine. Ser-24, Ser-26, and Ser-28 each carry phosphoserine. A compositionally biased stretch (polar residues) spans 25-46 (ASPSQVEVSAVASRNQNGGSQP). Residues 102-122 (GFLLHYCLLALTQGIVVNGLV) form a helical membrane-spanning segment. Topologically, residues 123–141 (NISISTIEKRYEMKSSLTG) are extracellular. The helical transmembrane segment at 142 to 162 (LISSSYDISFCVLSLFVSFFG) threads the bilayer. The Cytoplasmic portion of the chain corresponds to 163-168 (ERGHKP). Residues 169-193 (RWLAFASFMIGLGALVFSLPHFFSG) form a helical membrane-spanning segment. Residues 194-218 (RYELGTIFEDTCLTRNSTRCASSTS) are Extracellular-facing. A helical transmembrane segment spans residues 219–249 (LLSNYFYVFVLGQLLLGTGGTPLYTLGTAFI). The Cytoplasmic segment spans residues 250-269 (DDSVPTHKSSLYIGIGYSMS). A helical membrane pass occupies residues 270–290 (ILGPAIGYVLGGQLLTMYIDV). Residues 291–306 (AMGQSSDLTEDDPRWL) lie on the Extracellular side of the membrane. Residues 307 to 331 (GAWWIGFLLAWLFAWSLIMPFSCFP) traverse the membrane as a helical segment. Residues 332 to 376 (KHLPGTAKIQAGKTSQTHQNNSTSFQHMDENFGKSIKDFPTAVKN) lie on the Cytoplasmic side of the membrane. The chain crosses the membrane as a helical span at residues 377 to 398 (LMRNTVFICLVLSTTSEALVTT). At 399 to 418 (GFATFLPKFIENQFGLTSSF) the chain is on the extracellular side. The helical transmembrane segment at 419–442 (AATLGGAVLIPGAALGQILGGVLV) threads the bilayer. The Cytoplasmic segment spans residues 443–446 (SKFK). The chain crosses the membrane as a helical span at residues 447-470 (MKCKNTMKFALCTSGVALMLSFVF). Residues 471–580 (IYAKCENGPF…KTQCSNLPIF (110 aa)) are Extracellular-facing. The Kazal-like domain occupies 494 to 549 (GNLTAPCNANCNCLRSYYYPLCGSDGVQYFSPCFAGCLNSVSNRKPKAYYNCSCIE). Disulfide bonds link Cys-500–Cys-530, Cys-506–Cys-526, and Cys-515–Cys-547. A helical membrane pass occupies residues 581–603 (LGIFFITVIFTFMAGTPITVSIL). The Cytoplasmic segment spans residues 604–612 (RCVNHRQRS). The helical transmembrane segment at 613 to 638 (LALGVQFMLLRLLGTIPGPIIFGVTI) threads the bilayer. At 639-672 (DSTCVLWDINECGTKGACWIYDNIRMAHMLVAIS) the chain is on the extracellular side. The helical transmembrane segment at 673 to 690 (VTCKVITIFFNGLAIVLY) threads the bilayer. The Cytoplasmic segment spans residues 691 to 724 (KPPPPGTEVSFQSQNVVVSTITVEEDLNKIENEG).

This sequence belongs to the organo anion transporter (TC 2.A.60) family. As to expression, predominantly expressed in kidney and lung but also weakly expressed in brain. Localizes primarily in the proximal straight tubules, the S3 fraction of the nephron.

Its subcellular location is the basolateral cell membrane. It localises to the apical cell membrane. It catalyses the reaction estrone 3-sulfate(out) = estrone 3-sulfate(in). It carries out the reaction L-thyroxine(out) = L-thyroxine(in). The enzyme catalyses 3,3',5-triiodo-L-thyronine(out) = 3,3',5-triiodo-L-thyronine(in). The catalysed reaction is chenodeoxycholate(out) = chenodeoxycholate(in). It catalyses the reaction glycocholate(out) = glycocholate(in). It carries out the reaction L-homoarginine(in) = L-homoarginine(out). The enzyme catalyses L-arginine(in) = L-arginine(out). The catalysed reaction is N(omega),N(omega)-dimethyl-L-arginine(out) = N(omega),N(omega)-dimethyl-L-arginine(in). Functionally, mediates the transport of organic anions such as steroids (estrone 3-sulfate, chenodeoxycholate, glycocholate) and thyroid hormones (3,3',5-triiodo-L-thyronine (T3), L-thyroxine (T4)), in the kidney. Capable of transporting cAMP and pharmacological substances such as digoxin, ouabain and methotrexate. Transport is independent of sodium, chloride ion, and ATP. Transport activity is stimulated by an acidic extracellular environment due to increased substrate affinity to the transporter. The driving force for this transport activity is currently not known. The role of hydrogencarbonate (HCO3(-), bicarbonate) as the probable counteranion that exchanges for organic anions is still not well defined. Functions as an uptake transporter at the apical membrane, suggesting a role in renal reabsorption. Involved in the renal secretion of the uremic toxin ADMA (N(omega),N(omega)-dimethyl-L-arginine or asymmetrical dimethylarginine), which is associated to cardiovascular events and mortality, and the structurally related amino acids L-arginine and L-homoarginine (a cardioprotective biomarker). Can act bidirectionally, suggesting a dual protective role of this transport protein; exporting L-homoarginine after being synthesized in proximal tubule cells, and mediating uptake of ADMA from the blood into proximal tubule cells where it is degraded by the enzyme dimethylarginine dimethylaminohydrolase 1 (DDAH1). May be involved in sperm maturation by enabling directed movement of organic anions and compounds within or between cells. This ion-transporting process is important to maintain the strict epididymal homeostasis necessary for sperm maturation. May have a role in secretory functions since seminal vesicle epithelial cells are assumed to secrete proteins involved in decapacitation by modifying surface proteins to facilitate the acquisition of the ability to fertilize the egg. This Rattus norvegicus (Rat) protein is Solute carrier organic anion transporter family member 4C1.